The following is a 348-amino-acid chain: Eukaryotic translation initiation factor 3 subunit H (348 aa).

Residues 1-25 (MASRKEGSGAAGGGFGASKGKGKAA) are disordered. Positions 9 to 19 (GAAGGGFGASK) are enriched in gly residues. The 135-residue stretch at 35–169 (VQIDGLVVLK…LKAYRLTPKL (135 aa)) folds into the MPN domain. Residues 266-285 (QQQQKHQYQQRRQQENLQRQ) show a composition bias toward low complexity. Residues 266-304 (QQQQKHQYQQRRQQENLQRQSRGEAPLPEEDINKLFKPP) form a disordered region.

The protein belongs to the eIF-3 subunit H family. In terms of assembly, component of the eukaryotic translation initiation factor 3 (eIF-3) complex, which is composed of 13 subunits: EIF3A, EIF3B, EIF3C, EIF3D, EIF3E, EIF3F, EIF3G, EIF3H, EIF3I, EIF3J, EIF3K, EIF3L and EIF3M.

It localises to the cytoplasm. Its function is as follows. Component of the eukaryotic translation initiation factor 3 (eIF-3) complex, which is involved in protein synthesis of a specialized repertoire of mRNAs and, together with other initiation factors, stimulates binding of mRNA and methionyl-tRNAi to the 40S ribosome. The eIF-3 complex specifically targets and initiates translation of a subset of mRNAs involved in cell proliferation. This is Eukaryotic translation initiation factor 3 subunit H from Gallus gallus (Chicken).